Consider the following 186-residue polypeptide: Small ribosomal subunit protein uS5 (186 aa).

The 64-residue stretch at phenylalanine 20–valine 83 folds into the S5 DRBM domain.

This sequence belongs to the universal ribosomal protein uS5 family. As to quaternary structure, part of the 30S ribosomal subunit. Contacts proteins S4 and S8.

Its function is as follows. With S4 and S12 plays an important role in translational accuracy. Located at the back of the 30S subunit body where it stabilizes the conformation of the head with respect to the body. The polypeptide is Small ribosomal subunit protein uS5 (Brucella anthropi (strain ATCC 49188 / DSM 6882 / CCUG 24695 / JCM 21032 / LMG 3331 / NBRC 15819 / NCTC 12168 / Alc 37) (Ochrobactrum anthropi)).